Reading from the N-terminus, the 146-residue chain is D-aminoacyl-tRNA deacylase (146 aa).

Positions glycine 137–proline 138 match the Gly-cisPro motif, important for rejection of L-amino acids motif.

This sequence belongs to the DTD family. In terms of assembly, homodimer.

It localises to the cytoplasm. The enzyme catalyses glycyl-tRNA(Ala) + H2O = tRNA(Ala) + glycine + H(+). The catalysed reaction is a D-aminoacyl-tRNA + H2O = a tRNA + a D-alpha-amino acid + H(+). In terms of biological role, an aminoacyl-tRNA editing enzyme that deacylates mischarged D-aminoacyl-tRNAs. Also deacylates mischarged glycyl-tRNA(Ala), protecting cells against glycine mischarging by AlaRS. Acts via tRNA-based rather than protein-based catalysis; rejects L-amino acids rather than detecting D-amino acids in the active site. By recycling D-aminoacyl-tRNA to D-amino acids and free tRNA molecules, this enzyme counteracts the toxicity associated with the formation of D-aminoacyl-tRNA entities in vivo and helps enforce protein L-homochirality. The polypeptide is D-aminoacyl-tRNA deacylase (Bacillus thuringiensis subsp. konkukian (strain 97-27)).